The chain runs to 340 residues: Protein-arginine kinase (340 aa).

A Phosphagen kinase C-terminal domain is found at 14–244; it reads IVITTRIRLA…EQIINQENLS (231 aa). ATP is bound by residues 17 to 21, His-81, Arg-115, 166 to 170, and 197 to 202; these read TTRIR, RASVM, and RGLWGE.

Belongs to the ATP:guanido phosphotransferase family.

It catalyses the reaction L-arginyl-[protein] + ATP = N(omega)-phospho-L-arginyl-[protein] + ADP + H(+). Catalyzes the specific phosphorylation of arginine residues in proteins. The polypeptide is Protein-arginine kinase (Clostridium acetobutylicum (strain ATCC 824 / DSM 792 / JCM 1419 / IAM 19013 / LMG 5710 / NBRC 13948 / NRRL B-527 / VKM B-1787 / 2291 / W)).